Reading from the N-terminus, the 472-residue chain is Sarcalumenin (472 aa).

A signal peptide spans 1-20 (MKRLNLLCCCVASLLLLGTA). N-linked (GlcNAc...) asparagine glycosylation occurs at leucine 59. The region spanning 89 to 330 (ITSKPMVLFL…IENRMENKIA (242 aa)) is the Dynamin-type G domain. The segment at 99–106 (GPWSVGKS) is G1 motif. The G2 motif stretch occupies residues 127–128 (EP). A G3 motif region spans residues 189-192 (DTPG). The G4 motif stretch occupies residues 254-257 (NKAD). Position 278 (leucine 278) is a region of interest, G5 motif. Asparagine 280 and asparagine 388 each carry an N-linked (GlcNAc...) asparagine glycan.

Belongs to the TRAFAC class dynamin-like GTPase superfamily. Dynamin/Fzo/YdjA family. Post-translationally, N-glycosylated.

It is found in the sarcoplasmic reticulum lumen. Its subcellular location is the sarcoplasmic reticulum membrane. This chain is Sarcalumenin (SRL), found in Gallus gallus (Chicken).